The primary structure comprises 211 residues: Urease accessory protein UreF (211 aa).

The tract at residues 71–93 (DDADRETDARTPAPAARHASRSQ) is disordered.

This sequence belongs to the UreF family. UreD, UreF and UreG form a complex that acts as a GTP-hydrolysis-dependent molecular chaperone, activating the urease apoprotein by helping to assemble the nickel containing metallocenter of UreC. The UreE protein probably delivers the nickel.

The protein localises to the cytoplasm. Its function is as follows. Required for maturation of urease via the functional incorporation of the urease nickel metallocenter. In Mycobacterium bovis (strain ATCC BAA-935 / AF2122/97), this protein is Urease accessory protein UreF.